The chain runs to 398 residues: Serine/threonine-protein kinase 32A (398 aa).

The N-myristoyl glycine moiety is linked to residue Gly-2. One can recognise a Protein kinase domain in the interval 23–281 (FEILRAIGKG…LTDIQNFPYM (259 aa)). Residues 29–37 (IGKGSFGKV) and Lys-52 each bind ATP. Asp-146 (proton acceptor) is an active-site residue. Residues 379–398 (ALEQTKNNTEEEEDGQNNNL) are disordered. Positions 388–398 (EEEEDGQNNNL) are enriched in acidic residues.

It belongs to the protein kinase superfamily. Ser/Thr protein kinase family. Mg(2+) is required as a cofactor.

It is found in the cell membrane. It catalyses the reaction L-seryl-[protein] + ATP = O-phospho-L-seryl-[protein] + ADP + H(+). It carries out the reaction L-threonyl-[protein] + ATP = O-phospho-L-threonyl-[protein] + ADP + H(+). The sequence is that of Serine/threonine-protein kinase 32A from Mus musculus (Mouse).